Consider the following 240-residue polypeptide: ATP-dependent dethiobiotin synthetase BioD (240 aa).

15-20 (EIGKTF) lines the ATP pocket. Thr-19 lines the Mg(2+) pocket. The active site involves Lys-40. Residues Asp-57, 118–121 (EGVG), and 178–179 (NR) contribute to the ATP site. Mg(2+) is bound by residues Asp-57 and Glu-118.

Belongs to the dethiobiotin synthetase family. In terms of assembly, homodimer. Mg(2+) serves as cofactor.

It localises to the cytoplasm. It carries out the reaction (7R,8S)-7,8-diammoniononanoate + CO2 + ATP = (4R,5S)-dethiobiotin + ADP + phosphate + 3 H(+). The protein operates within cofactor biosynthesis; biotin biosynthesis; biotin from 7,8-diaminononanoate: step 1/2. Its function is as follows. Catalyzes a mechanistically unusual reaction, the ATP-dependent insertion of CO2 between the N7 and N8 nitrogen atoms of 7,8-diaminopelargonic acid (DAPA, also called 7,8-diammoniononanoate) to form a ureido ring. This chain is ATP-dependent dethiobiotin synthetase BioD, found in Burkholderia pseudomallei (strain 1106a).